The primary structure comprises 232 residues: Orotate phosphoribosyltransferase (232 aa).

5-phospho-alpha-D-ribose 1-diphosphate-binding positions include Arg107, Lys108, Lys111, His113, and 133–141 (EDLTTAGGS). Position 137 (Thr137) interacts with orotate.

It belongs to the purine/pyrimidine phosphoribosyltransferase family. PyrE subfamily. Homodimer. The cofactor is Mg(2+).

The enzyme catalyses orotidine 5'-phosphate + diphosphate = orotate + 5-phospho-alpha-D-ribose 1-diphosphate. It participates in pyrimidine metabolism; UMP biosynthesis via de novo pathway; UMP from orotate: step 1/2. In terms of biological role, catalyzes the transfer of a ribosyl phosphate group from 5-phosphoribose 1-diphosphate to orotate, leading to the formation of orotidine monophosphate (OMP). This is Orotate phosphoribosyltransferase from Rhizobium rhizogenes (strain K84 / ATCC BAA-868) (Agrobacterium radiobacter).